The chain runs to 667 residues: Small ribosomal subunit protein mS39 (667 aa).

The N-terminal 11 residues, 1–11, are a transit peptide targeting the mitochondrion; sequence MASSCSQALRH. Positions 199-226 are disordered; the sequence is EAEQRSEEMEDIQDETQTKKGRSPKASD. PPR repeat units lie at residues 249-283, 284-323, 324-360, 361-400, 482-516, and 565-599; these read NTRS…RLKA, DVHI…KVKP, NLLT…SIEP, SLAS…SFTP, SSNA…GHGN, and TASS…NRVP.

The protein belongs to the mitochondrion-specific ribosomal protein mS39 family.

It localises to the mitochondrion. Its function is as follows. Mitochondrial RNA-binding protein that may have a role in mitochondrial translation. This Danio rerio (Zebrafish) protein is Small ribosomal subunit protein mS39 (ptcd3).